Consider the following 506-residue polypeptide: 2,3-bisphosphoglycerate-independent phosphoglycerate mutase (506 aa).

2 residues coordinate Mn(2+): Asp-13 and Ser-63. The active-site Phosphoserine intermediate is the Ser-63. Substrate is bound by residues His-124, 153–154 (RD), Arg-183, Arg-189, 254–257 (RADR), and Lys-330. Residues Asp-396, His-400, Asp-437, His-438, and His-456 each contribute to the Mn(2+) site.

It belongs to the BPG-independent phosphoglycerate mutase family. As to quaternary structure, monomer. The cofactor is Mn(2+).

It carries out the reaction (2R)-2-phosphoglycerate = (2R)-3-phosphoglycerate. Its pathway is carbohydrate degradation; glycolysis; pyruvate from D-glyceraldehyde 3-phosphate: step 3/5. Catalyzes the interconversion of 2-phosphoglycerate and 3-phosphoglycerate. This Cereibacter sphaeroides (strain ATCC 17023 / DSM 158 / JCM 6121 / CCUG 31486 / LMG 2827 / NBRC 12203 / NCIMB 8253 / ATH 2.4.1.) (Rhodobacter sphaeroides) protein is 2,3-bisphosphoglycerate-independent phosphoglycerate mutase.